The primary structure comprises 462 residues: WD repeat-containing protein WRAP73 (462 aa).

4 WD repeats span residues 46 to 86 (TCLD…WHCK), 89 to 129 (EGSA…VSYI), 176 to 210 (TDTQ…YSLD), and 221 to 260 (EWSL…MITE). A Phosphoserine modification is found at Ser-281. WD repeat units follow at residues 328–369 (NPRM…LFVV) and 371–410 (EHMS…SVQV).

Interacts with SSX2IP. In terms of tissue distribution, ubiquitous.

Its subcellular location is the cytoplasm. It localises to the cytoskeleton. The protein localises to the microtubule organizing center. It is found in the centrosome. In terms of biological role, the SSX2IP:WRAP73 complex is proposed to act as regulator of spindle anchoring at the mitotic centrosome. Required for the centrosomal localization of SSX2IP and normal mitotic bipolar spindle morphology. Required for the targeting of centriole satellite proteins to centrosomes such as of PCM1, SSX2IP, CEP290 and PIBF1/CEP90. Required for ciliogenesis and involved in the removal of the CEP97:CCP110 complex from the mother centriole. Involved in ciliary vesicle formation at the mother centriole and required for the docking of vesicles to the basal body during ciliogenesis; may promote docking of RAB8A- and ARL13B-containing vesicles. This is WD repeat-containing protein WRAP73 (Wrap73) from Mus musculus (Mouse).